Reading from the N-terminus, the 257-residue chain is Tryptophan synthase alpha chain (257 aa).

Catalysis depends on proton acceptor residues Glu-44 and Asp-55.

Belongs to the TrpA family. In terms of assembly, tetramer of two alpha and two beta chains.

The catalysed reaction is (1S,2R)-1-C-(indol-3-yl)glycerol 3-phosphate + L-serine = D-glyceraldehyde 3-phosphate + L-tryptophan + H2O. Its pathway is amino-acid biosynthesis; L-tryptophan biosynthesis; L-tryptophan from chorismate: step 5/5. The alpha subunit is responsible for the aldol cleavage of indoleglycerol phosphate to indole and glyceraldehyde 3-phosphate. This Chlamydia felis (strain Fe/C-56) (Chlamydophila felis) protein is Tryptophan synthase alpha chain.